The following is a 130-amino-acid chain: Small ribosomal subunit protein uS9 (130 aa).

This sequence belongs to the universal ribosomal protein uS9 family.

This chain is Small ribosomal subunit protein uS9, found in Albidiferax ferrireducens (strain ATCC BAA-621 / DSM 15236 / T118) (Rhodoferax ferrireducens).